Here is a 205-residue protein sequence, read N- to C-terminus: Small ribosomal subunit protein uS4 (205 aa).

Residues 1-16 (MSKRESAKHKIDRRLG) are compositionally biased toward basic and acidic residues. The segment at 1–46 (MSKRESAKHKIDRRLGENIWGRPKSPVNRREYGPGQHGQRRKGKLS) is disordered. One can recognise an S4 RNA-binding domain in the interval 94–157 (SRLDAVVYRA…KQLAIVLEAV (64 aa)).

The protein belongs to the universal ribosomal protein uS4 family. In terms of assembly, part of the 30S ribosomal subunit. Contacts protein S5. The interaction surface between S4 and S5 is involved in control of translational fidelity.

In terms of biological role, one of the primary rRNA binding proteins, it binds directly to 16S rRNA where it nucleates assembly of the body of the 30S subunit. Functionally, with S5 and S12 plays an important role in translational accuracy. This is Small ribosomal subunit protein uS4 from Brucella abortus (strain S19).